A 509-amino-acid polypeptide reads, in one-letter code: ATP synthase subunit alpha, mitochondrial (509 aa).

171 to 178 (GDRQTGKT) provides a ligand contact to ATP.

Belongs to the ATPase alpha/beta chains family. F-type ATPases have 2 components, CF(1) - the catalytic core - and CF(0) - the membrane proton channel. CF(1) has five subunits: alpha(3), beta(3), gamma(1), delta(1), epsilon(1). CF(0) has three main subunits: a, b and c.

Its subcellular location is the mitochondrion. It localises to the mitochondrion inner membrane. Its function is as follows. Mitochondrial membrane ATP synthase (F(1)F(0) ATP synthase or Complex V) produces ATP from ADP in the presence of a proton gradient across the membrane which is generated by electron transport complexes of the respiratory chain. F-type ATPases consist of two structural domains, F(1) - containing the extramembraneous catalytic core, and F(0) - containing the membrane proton channel, linked together by a central stalk and a peripheral stalk. During catalysis, ATP synthesis in the catalytic domain of F(1) is coupled via a rotary mechanism of the central stalk subunits to proton translocation. Subunits alpha and beta form the catalytic core in F(1). Rotation of the central stalk against the surrounding alpha(3)beta(3) subunits leads to hydrolysis of ATP in three separate catalytic sites on the beta subunits. Subunit alpha does not bear the catalytic high-affinity ATP-binding sites. The sequence is that of ATP synthase subunit alpha, mitochondrial (ATPA) from Oryza sativa subsp. indica (Rice).